The chain runs to 281 residues: 3-hydroxybutyryl-CoA dehydrogenase (281 aa).

This sequence belongs to the 3-hydroxyacyl-CoA dehydrogenase family.

It carries out the reaction (3S)-3-hydroxybutanoyl-CoA + NADP(+) = acetoacetyl-CoA + NADPH + H(+). Its pathway is lipid metabolism; butanoate metabolism. The chain is 3-hydroxybutyryl-CoA dehydrogenase (hbd) from Clostridioides difficile (Peptoclostridium difficile).